Consider the following 538-residue polypeptide: Probable bifunctional tRNA threonylcarbamoyladenosine biosynthesis protein (538 aa).

The kae1 stretch occupies residues 1–327 (MIVLICLGIE…FRTDEVEAPW (327 aa)). Fe cation is bound by residues His-111, His-115, and Tyr-132. L-threonylcarbamoyladenylate is bound by residues 132 to 136 (YVSGG), Asp-164, Gly-177, Glu-181, and Asn-260. Residue Asp-288 coordinates Fe cation. One can recognise a Protein kinase domain in the interval 336–538 (KLPDNLIAKG…EIESRGRYTH (203 aa)). ATP is bound by residues 342-350 (IAKGAESDI) and Lys-363. The Proton acceptor; for kinase activity role is filled by Asp-452.

This sequence in the N-terminal section; belongs to the KAE1 / TsaD family. In the C-terminal section; belongs to the protein kinase superfamily. Tyr protein kinase family. BUD32 subfamily. As to quaternary structure, component of the KEOPS complex that consists of Kae1, Bud32, Cgi121 and Pcc1; the whole complex dimerizes. Fe(2+) is required as a cofactor.

It is found in the cytoplasm. It carries out the reaction L-seryl-[protein] + ATP = O-phospho-L-seryl-[protein] + ADP + H(+). The catalysed reaction is L-threonyl-[protein] + ATP = O-phospho-L-threonyl-[protein] + ADP + H(+). It catalyses the reaction L-threonylcarbamoyladenylate + adenosine(37) in tRNA = N(6)-L-threonylcarbamoyladenosine(37) in tRNA + AMP + H(+). In terms of biological role, required for the formation of a threonylcarbamoyl group on adenosine at position 37 (t(6)A37) in tRNAs that read codons beginning with adenine. Is a component of the KEOPS complex that is probably involved in the transfer of the threonylcarbamoyl moiety of threonylcarbamoyl-AMP (TC-AMP) to the N6 group of A37. The Kae1 domain likely plays a direct catalytic role in this reaction. The Bud32 domain probably displays kinase activity that regulates Kae1 function. The chain is Probable bifunctional tRNA threonylcarbamoyladenosine biosynthesis protein from Methanobrevibacter smithii (strain ATCC 35061 / DSM 861 / OCM 144 / PS).